Reading from the N-terminus, the 257-residue chain is MALAKRIIPCLDVTAGRVVKGVNFVELRDAGDPVEIARRYDDQGADELTFLDITATSDQRDLILPIIEAVASQVFIPLTVGGGVRAVEDVRRLLNAGADKVSMNSSAVANPQLVRDAADKYGSQCIVVAIDAKRVSADGETPRWEVFTHGGRKNTGLDAIEWARKMAELGAGEILLTSMDRDGTKSGFDLALTRGVSDAVPVPVIASGGVGSLQHLADGIKDGRADAVLAASIFHYGEHTVGEAKRFMADQGIPVRL.

Catalysis depends on residues D12 and D131.

Belongs to the HisA/HisF family. In terms of assembly, heterodimer of HisH and HisF.

Its subcellular location is the cytoplasm. The catalysed reaction is 5-[(5-phospho-1-deoxy-D-ribulos-1-ylimino)methylamino]-1-(5-phospho-beta-D-ribosyl)imidazole-4-carboxamide + L-glutamine = D-erythro-1-(imidazol-4-yl)glycerol 3-phosphate + 5-amino-1-(5-phospho-beta-D-ribosyl)imidazole-4-carboxamide + L-glutamate + H(+). It participates in amino-acid biosynthesis; L-histidine biosynthesis; L-histidine from 5-phospho-alpha-D-ribose 1-diphosphate: step 5/9. Functionally, IGPS catalyzes the conversion of PRFAR and glutamine to IGP, AICAR and glutamate. The HisF subunit catalyzes the cyclization activity that produces IGP and AICAR from PRFAR using the ammonia provided by the HisH subunit. The chain is Imidazole glycerol phosphate synthase subunit HisF from Burkholderia lata (strain ATCC 17760 / DSM 23089 / LMG 22485 / NCIMB 9086 / R18194 / 383).